A 462-amino-acid polypeptide reads, in one-letter code: Cysteine--tRNA ligase (462 aa).

C29 provides a ligand contact to Zn(2+). The 'HIGH' region signature appears at 31 to 41 (PTVYNHAHIGN). Positions 211, 236, and 240 each coordinate Zn(2+). Residues 269-273 (KMSKS) carry the 'KMSKS' region motif. K272 serves as a coordination point for ATP.

The protein belongs to the class-I aminoacyl-tRNA synthetase family. Monomer. Zn(2+) serves as cofactor.

Its subcellular location is the cytoplasm. The catalysed reaction is tRNA(Cys) + L-cysteine + ATP = L-cysteinyl-tRNA(Cys) + AMP + diphosphate. The polypeptide is Cysteine--tRNA ligase (Caulobacter sp. (strain K31)).